We begin with the raw amino-acid sequence, 241 residues long: GPI-anchored hemophore RBT5 (241 aa).

A signal peptide spans Met-1–Ala-20. A CFEM domain is found at Asn-26–Ala-137. Cystine bridges form between Cys-54–Cys-94, Cys-58–Cys-89, Cys-68–Cys-75, and Cys-77–Cys-110. Asp-72 serves as a coordination point for heme. Low complexity-rich tracts occupy residues Thr-140 to Thr-154 and Lys-163 to Thr-182. The segment at Thr-140–Ala-210 is disordered. Residues Ser-183–Glu-199 show a composition bias toward basic and acidic residues. Residues Ser-200–Ala-210 show a composition bias toward low complexity. Asn-221 carries GPI-anchor amidated asparagine lipidation. Residues Ala-222–Phe-241 constitute a propeptide, removed in mature form.

This sequence belongs to the RBT5 family. As to quaternary structure, interacts with PGA7. In terms of processing, the GPI-anchor is attached to the protein in the endoplasmic reticulum and serves to target the protein to the cell surface. There, the glucosamine-inositol phospholipid moiety is cleaved off and the GPI-modified mannoprotein is covalently attached via its lipidless GPI glycan remnant to the 1,6-beta-glucan of the outer cell wall layer. Post-translationally, mannosylated.

Its subcellular location is the secreted. It is found in the cell wall. The protein resides in the cell membrane. In terms of biological role, GPI-linked hyphal surface heme-binding protein involved in heme-iron utilization. Heme transfer occurs between PGA7, RBT5 and CSA2 supporting a model in which the 3 CFEM proteins cooperate in a heme-acquisition system and form a cross-cell wall heme-transfer cascade. The ability to acquire iron from host tissues is a major virulence factor of pathogenic microorganisms. Required for biofilm formation. The sequence is that of GPI-anchored hemophore RBT5 from Candida albicans (strain SC5314 / ATCC MYA-2876) (Yeast).